We begin with the raw amino-acid sequence, 382 residues long: Kelch domain-containing protein 3 (382 aa).

Kelch repeat units lie at residues 25–77 (RVYS…PYMR), 88–138 (TVFL…VLGK), 139–189 (IMYI…TMLG), 191–249 (HMYV…GYNG), and 251–301 (LYIF…IVGD).

In terms of assembly, component of a CRL2(KLHDC3) complex, also named ECS(KLHDC3) complex, composed of CUL2, Elongin BC (ELOB and ELOC), RBX1 and substrate-specific adapter KLHDC3. May form oligomers as a KLHDC3-ELOB-ELOC complex; this interaction is likely autoinhibitory for the E3 ligase complex. Expressed specifically in testis, particularly in pachytene spermatocytes.

It localises to the cytoplasm. Its pathway is protein modification; protein ubiquitination. In terms of biological role, substrate-recognition component of a Cul2-RING (CRL2) E3 ubiquitin-protein ligase complex of the DesCEND (destruction via C-end degrons) pathway, which recognizes a C-degron located at the extreme C terminus of target proteins, leading to their ubiquitination and degradation. The C-degron recognized by the DesCEND pathway is usually a motif of less than ten residues and can be present in full-length proteins, truncated proteins or proteolytically cleaved forms. The CRL2(KLHDC3) complex specifically recognizes proteins with a glycine (Gly) at the C-terminus, leading to their ubiquitination and degradation: recognizes the C-terminal -Arg-(Xaa)n-Arg-Gly, -Arg-(Xaa)n-Lys-Gly, and -Arg-(Xaa)n-Gln-Gly degrons. The CRL2(KLHDC3) complex mediates ubiquitination and degradation of truncated SELENOV and SEPHS2 selenoproteins produced by failed UGA/Sec decoding, which end with a glycine. May be involved in meiotic recombination process. This Mus musculus (Mouse) protein is Kelch domain-containing protein 3.